We begin with the raw amino-acid sequence, 226 residues long: Charged multivesicular body protein 4 (226 aa).

Positions Ile22–Gln88 form a coiled coil. Positions Gln169–Asn226 are disordered.

The protein belongs to the SNF7 family. Homopolymer; forms elongated striated filaments of uniform ~10nm width. Monomers interact in a staggered arrangement mediated by complementary charged electrostatic surfaces. Interacts with l(2)gd1 (via DM14 domains 1 and 3); the interaction is direct and blocks access to the surface involved in homopolymerization. This interaction may be required for the ESCRT-III complex role in multivesicular body formation. Expressed at considerably higher levels in testis than in ovary. Expressed in midgut, eye, mouthparts and male accessory gland.

The protein resides in the endosome. It is found in the multivesicular body. It localises to the midbody. May be regulated by aurB/Aurora kinase B-dependent phosphorylation. Probable core polymerisation component of the endosomal sorting required for transport (ESCRT) III complex involved in multiple cellular processes requiring the outward bending of membranes, including vesicle budding, membrane repair and cytokinesis. The ESCRT pathway involves 4 complexes (ESCRT-0, -I, -II and -III) that sequentially assemble on the cytoplasmic side of membranes and induce membrane remodeling, budding and scission. As part of the ESCRT-III complex, involved in the budding of intraluminal vesicles (ILVs) into endosomes to form multivesicular bodies (MVBs), which target their contents for degradation via the endolysosomal pathway. Involved in regulation of signal transduction pathways, including the Notch and BMP/decapentaplegic (dpp) pathways, by sequestering the intracellular domains of activated receptors into ILVs, isolating them from the cytoplasm and targeting them for lysosomal degradation. Involved in targeting ubiquitilated proteins, such as mono-ubiquitilanated N/Notch, to MVBs for degradation. Plays a role in wing development by regulating Notch signaling. Involved in abscission of germline cells during oogenesis. Involved in spermiogenesis. Required for efficient cytoplasmic isolation and abscission during cytokinesis of epithelial sensory organ precursor cells. May be involved in septate junction remodeling and maintenance. The chain is Charged multivesicular body protein 4 from Drosophila melanogaster (Fruit fly).